A 294-amino-acid polypeptide reads, in one-letter code: Glycine--tRNA ligase alpha subunit (294 aa).

This sequence belongs to the class-II aminoacyl-tRNA synthetase family. Tetramer of two alpha and two beta subunits.

It is found in the cytoplasm. The catalysed reaction is tRNA(Gly) + glycine + ATP = glycyl-tRNA(Gly) + AMP + diphosphate. In Sulfurovum sp. (strain NBC37-1), this protein is Glycine--tRNA ligase alpha subunit.